The chain runs to 487 residues: Benzaldehyde dehydrogenase [NAD(+)] (487 aa).

232–237 (GSTQVG) lines the NAD(+) pocket. Catalysis depends on residues Glu-254 and Cys-288.

Belongs to the aldehyde dehydrogenase family. Homotetramer.

It carries out the reaction benzaldehyde + NAD(+) + H2O = benzoate + NADH + 2 H(+). This is Benzaldehyde dehydrogenase [NAD(+)] (xylC) from Pseudomonas putida (Arthrobacter siderocapsulatus).